Consider the following 269-residue polypeptide: MYWIINDNIEFWPEHRKLISVHNADLNVVLTTPASRCLSLLLEAFPDVVAQQDFFTRVWEEEGMRVPTNTLYQNISIIRRGFRAVGDTTHSLIATVPRRGFKIHNDINIQNHVINSSTDAHTHNAPPAIKVNAGYKESIGGAKNFNNKILKHIKSHLIMLSAFVIGAYSAYWLWNNNQPKPFFKDYKTVAEINGCHFNVTEDTIDGLKEFDKYKTRILDSGINCKKHPWLYFPLAKSSPGMIVMACNKNYNQHEVANCLTLSYREVNRD.

The segment at residues 3–105 is a DNA-binding region (ompR/PhoB-type); the sequence is WIINDNIEFW…VPRRGFKIHN (103 aa).

This sequence to V.cholerae cholera toxin transcriptional activator (ToxR).

This is an uncharacterized protein from Escherichia coli (strain K12).